The primary structure comprises 243 residues: Outer membrane protein A (243 aa).

5 beta stranded membrane passes run 1–8 (LTAKLGYP), 13–21 (LDIYTRLGG), 48–57 (PVFAGGVEWA), 62–69 (IATRLEYQ), and 88–96 (LLSLGVSYR). A run of 4 repeats spans residues 107 to 108 (AP), 109 to 110 (AP), 111 to 112 (AP), and 113 to 114 (AP). Residues 107 to 114 (APAPAPAP) form a 4 X 2 AA tandem repeats of A-P region. An OmpA-like domain is found at 116–243 (VQTKHFTLKS…RRVEIEVKGI (128 aa)). A disulfide bridge links C217 with C229.

Belongs to the outer membrane OOP (TC 1.B.6) superfamily. OmpA family. Monomer and homodimer.

The protein localises to the cell outer membrane. Functionally, with TolR probably plays a role in maintaining the position of the peptidoglycan cell wall in the periplasm. Acts as a porin with low permeability that allows slow penetration of small solutes; an internal gate slows down solute passage. Required for conjugation with F-type plasmids; probably serves as the mating receptor on recipient cells. This Escherichia fergusonii protein is Outer membrane protein A.